The following is an 879-amino-acid chain: MGKGEGYLDPTILSVASGSRNSGKGKERTRRKGGHKYHSLHVQDEEEEEPPESDALRTRGKVGLNAYEKALWKWVNVDDLDGFLQEVYDYYKGKGIYCIVLARVLNLLTTFFVIAFSTFLISCIDYSKLFSSISTAEAVGRLEDVLVAQCITKFVHFKLYILNKTNSSAYDYRGSFAHTLFLIILSAFFIFQVASFAMSVPRLLDMYRFYTHLLGVPDADIQTLPWPEIVRLIGDIRKHNPVTSLSNGQATALADMVGNDAKAPAKKLDAHDIANRILRQENYLIALFNKDLLDLRVRIPVPHVLTAFIPSSILISSADAPLPSLQSEPERKFLSFGANHLTKALEWNLRFCLLGYLFDRRGQVRKEFVREKRRKDLVQGLRRRFIFMGILNAIFAPFIILYLLIYSFFRYFEWKFREFNELPHLFERRLDRSYEIAKEYVDQFPKERTALVMRFVAFIAGSFAAVLLVASLIDPDLFLHFEITPHRTVLFYLGVFGSILAISRGMVPQENMVFDPEASLNEVVRWTHYLPVEWRGQLHSQMVHQEFSKLFALKIMIFFSELLSVILTPFILFFSLPPCAAAIIDFFREFTVHVDGVGYVCSFAVFDFARYGNVDANQPETGLEGATGPDGGPAADGFAAGKPSRPTTRRTTSSSPSRLKHRDWRGNENKMEQSFLHFKATHPDWQPSDPSSSLFLDRLMGAGTRNRHGGGPVSAATGGISGSIYGGGGGGVGGRGLGVDGSVMAEMEEERLRAKRQSYERAWAKSSHLHRPDSSHSHPLRHPHSAASEIIEEEEGGEGDKGDDSIDGWSKRVKTDGETDDEEERERLWKDEGVIIIFFLTNNHITVVVMNVCRCIFRVAADEHKTAGRINKSQTRRLT.

A disordered region spans residues 1-56 (MGKGEGYLDPTILSVASGSRNSGKGKERTRRKGGHKYHSLHVQDEEEEEPPESDAL). Residues 27-39 (ERTRRKGGHKYHS) show a composition bias toward basic residues. A helical transmembrane segment spans residues 104-124 (VLNLLTTFFVIAFSTFLISCI). 2 N-linked (GlcNAc...) asparagine glycosylation sites follow: N163 and N166. Residues 180 to 200 (LFLIILSAFFIFQVASFAMSV) form a helical membrane-spanning segment. Residues 385-405 (FIFMGILNAIFAPFIILYLLI) lie within the membrane without spanning it. Helical transmembrane passes span 455–475 (FVAF…LIDP) and 488–508 (TVLF…GMVP). An intramembrane segment occupies 555-575 (IMIFFSELLSVILTPFILFFS). Disordered stretches follow at residues 620 to 666 (ETGL…DWRG) and 763 to 825 (WAKS…EEER). The segment covering 632–657 (GPAADGFAAGKPSRPTTRRTTSSSPS) has biased composition (low complexity). Residues 798-817 (EGDKGDDSIDGWSKRVKTDG) show a composition bias toward basic and acidic residues.

The protein belongs to the ATG9 family. As to quaternary structure, homotrimer; forms a homotrimer with a central pore that forms a path between the two membrane leaflets. Phosphorylated by ATG1. ATG1 phosphorylation is required for preautophagosome elongation.

It localises to the preautophagosomal structure membrane. The protein resides in the cytoplasmic vesicle membrane. The protein localises to the golgi apparatus membrane. It is found in the endoplasmic reticulum membrane. The catalysed reaction is a 1,2-diacyl-sn-glycero-3-phosphocholine(in) = a 1,2-diacyl-sn-glycero-3-phosphocholine(out). It carries out the reaction a 1,2-diacyl-sn-glycero-3-phospho-L-serine(in) = a 1,2-diacyl-sn-glycero-3-phospho-L-serine(out). The enzyme catalyses a 1,2-diacyl-sn-glycero-3-phosphoethanolamine(in) = a 1,2-diacyl-sn-glycero-3-phosphoethanolamine(out). It catalyses the reaction a 1,2-diacyl-sn-glycero-3-phospho-(1D-myo-inositol-3-phosphate)(in) = a 1,2-diacyl-sn-glycero-3-phospho-(1D-myo-inositol-3-phosphate)(out). In terms of biological role, phospholipid scramblase involved in autophagy and cytoplasm to vacuole transport (Cvt) vesicle formation. Cycles between the preautophagosomal structure/phagophore assembly site (PAS) and the cytoplasmic vesicle pool and supplies membrane for the growing autophagosome. Lipid scramblase activity plays a key role in preautophagosomal structure/phagophore assembly by distributing the phospholipids that arrive through ATG2 from the cytoplasmic to the luminal leaflet of the bilayer, thereby driving autophagosomal membrane expansion. Required for mitophagy. Also involved in endoplasmic reticulum-specific autophagic process and is essential for the survival of cells subjected to severe ER stress. Different machineries are required for anterograde trafficking to the PAS during either the Cvt pathway or bulk autophagy and for retrograde trafficking. This is Autophagy-related protein 9 (ATG9) from Cryptococcus neoformans var. neoformans serotype D (strain B-3501A) (Filobasidiella neoformans).